We begin with the raw amino-acid sequence, 64 residues long: uncharacterized protein (64 aa).

This is an uncharacterized protein from Bos taurus (Bovine).